A 298-amino-acid chain; its full sequence is Phosphatidylglycerol--prolipoprotein diacylglyceryl transferase (298 aa).

3 helical membrane-spanning segments follow: residues 17 to 37 (LAVR…IVVG), 59 to 79 (MMFY…VLFY), and 97 to 117 (GGMS…LFAW). Arginine 142 contributes to the a 1,2-diacyl-sn-glycero-3-phospho-(1'-sn-glycerol) binding site. A run of 2 helical transmembrane segments spans residues 230 to 250 (MGAI…TVEF) and 257 to 277 (FLGL…PMIV).

This sequence belongs to the Lgt family.

It localises to the cell inner membrane. The enzyme catalyses L-cysteinyl-[prolipoprotein] + a 1,2-diacyl-sn-glycero-3-phospho-(1'-sn-glycerol) = an S-1,2-diacyl-sn-glyceryl-L-cysteinyl-[prolipoprotein] + sn-glycerol 1-phosphate + H(+). Its pathway is protein modification; lipoprotein biosynthesis (diacylglyceryl transfer). In terms of biological role, catalyzes the transfer of the diacylglyceryl group from phosphatidylglycerol to the sulfhydryl group of the N-terminal cysteine of a prolipoprotein, the first step in the formation of mature lipoproteins. The polypeptide is Phosphatidylglycerol--prolipoprotein diacylglyceryl transferase (Burkholderia cenocepacia (strain ATCC BAA-245 / DSM 16553 / LMG 16656 / NCTC 13227 / J2315 / CF5610) (Burkholderia cepacia (strain J2315))).